The chain runs to 629 residues: MGYNAGSYDVIVIGAGHAGCEAGLAAARMGSKTLMLTINLDMVAFMPCNPSVGGPAKGIVVREIDALGGEMGRNIDKTHIQMRMLNTGKGPAVRALRAQADKFSYQHELKKTIEETPNLTLFQGLVERLIIEDGVCKGVITQAGAEYTAKTVVITTGTFLRGEIIMGDLKYSSGPNNQQPSITLSEHLEELGFDLVRFKTGTPPRVNSNTIDYSKTEIQPGDDKPRAFSFETTKFIMDQIPCWLTYTSTETHRLIDENLHRSAMYSGMIKGTGPRYCPSIEDKVVRFNDKPRHQIFLEPEGRNTQEVYVQGLSTSLPEDVQRAMLRTIPGLENVEMMRTGYAIEYDAIVPTQLWPTLETKKIKNLYTAGQINGTSGYEEAAGQGLMAGINAACRSLGKKEVILGRADAYIGVLIDDLVTKGTNEPYRLLTSRAEYRLLLRHDNADLRLTEVGREIGLIKEDRYERFTNKKLQIEQEKERLESIFIKPRPEVQELIRSIGGSELKDGIRASDLLRRPEVTYEHIHLLVPSEVALSDEITEQVEIQTKYEGYIEKSLQQVERMKKMENKKIPVDIDYDAISSLASEARQKLKDVRPLSMGQASRISGVNPADVSILLIYIEQGKIARVSNQ.

FAD is bound by residues 14 to 19, Val-126, and Ser-181; that span reads GAGHAG. Residue 273–287 coordinates NAD(+); it reads GPRYCPSIEDKVVRF. Gln-370 contacts FAD.

It belongs to the MnmG family. Homodimer. Heterotetramer of two MnmE and two MnmG subunits. Requires FAD as cofactor.

Its subcellular location is the cytoplasm. NAD-binding protein involved in the addition of a carboxymethylaminomethyl (cmnm) group at the wobble position (U34) of certain tRNAs, forming tRNA-cmnm(5)s(2)U34. The polypeptide is tRNA uridine 5-carboxymethylaminomethyl modification enzyme MnmG (Bacillus mycoides (strain KBAB4) (Bacillus weihenstephanensis)).